Consider the following 431-residue polypeptide: Protein EARLY STARVATION 1, chloroplastic (431 aa).

A chloroplast-targeting transit peptide spans 1-19 (MAACSRGLVARPFDLTARG). 2 disordered regions span residues 65–126 (GNKP…DTGI) and 403–431 (GVYP…SPLE). Positions 415-431 (PAPPSDDPPGMPPSPLE) are enriched in pro residues.

Belongs to the ESV1 family.

The protein localises to the plastid. It localises to the chloroplast stroma. Functionally, binds preferentially to highly ordered alpha-glucans, such as starch and crystalline maltodextrins. Involved in the organization of the starch granule matrix, thus influencing starch turnover by modulating the accessibility of starch polymers to modifying and degrading enzymes. Required for the control of starch degradation in leaves and starch distribution in nonphotosynthetic parts. Promotes gravitropic responses, negative in shoots but positive in roots, by facilitating starch granules (statoliths) formation in hypocotyls and roots columella. Facilitates tight packing of starch granules in grains. This is Protein EARLY STARVATION 1, chloroplastic from Oryza sativa subsp. indica (Rice).